The primary structure comprises 320 residues: Acyl-coenzyme A thioesterase 8 (320 aa).

Active-site charge relay system residues include Asp-233, Ser-255, and Gln-305. The Microbody targeting signal motif lies at 318–320 (SKL).

It belongs to the C/M/P thioester hydrolase family. As to quaternary structure, homodimer. Ubiquitous.

The protein resides in the peroxisome matrix. It carries out the reaction choloyl-CoA + H2O = cholate + CoA + H(+). The catalysed reaction is chenodeoxycholoyl-CoA + H2O = chenodeoxycholate + CoA + H(+). The enzyme catalyses acetyl-CoA + H2O = acetate + CoA + H(+). It catalyses the reaction malonyl-CoA + H2O = malonate + CoA + H(+). It carries out the reaction acetoacetyl-CoA + H2O = acetoacetate + CoA + H(+). The catalysed reaction is propanoyl-CoA + H2O = propanoate + CoA + H(+). The enzyme catalyses butanoyl-CoA + H2O = butanoate + CoA + H(+). It catalyses the reaction succinyl-CoA + H2O = succinate + CoA + H(+). It carries out the reaction glutaryl-CoA + H2O = glutarate + CoA + H(+). The catalysed reaction is hexanoyl-CoA + H2O = hexanoate + CoA + H(+). The enzyme catalyses hexanedioyl-CoA + H2O = hexanedioate + CoA + H(+). It catalyses the reaction octanoyl-CoA + H2O = octanoate + CoA + H(+). It carries out the reaction octanedioyl-CoA + H2O = octanedioate + CoA + H(+). The catalysed reaction is decanoyl-CoA + H2O = decanoate + CoA + H(+). The enzyme catalyses decanedioyl-CoA + H2O = decanedioate + CoA + H(+). It catalyses the reaction dodecanoyl-CoA + H2O = dodecanoate + CoA + H(+). It carries out the reaction dodecanedioyl-CoA + H2O = dodecanedioate + CoA + H(+). The catalysed reaction is tetradecanoyl-CoA + H2O = tetradecanoate + CoA + H(+). The enzyme catalyses (9Z)-tetradecenoyl-CoA + H2O = (9Z)-tetradecenoate + CoA + H(+). It catalyses the reaction hexadecanoyl-CoA + H2O = hexadecanoate + CoA + H(+). It carries out the reaction (9Z)-hexadecenoyl-CoA + H2O = (9Z)-hexadecenoate + CoA + H(+). The catalysed reaction is octadecanoyl-CoA + H2O = octadecanoate + CoA + H(+). The enzyme catalyses (9Z)-octadecenoyl-CoA + H2O = (9Z)-octadecenoate + CoA + H(+). It catalyses the reaction (9Z,12Z)-octadecadienoyl-CoA + H2O = (9Z,12Z)-octadecadienoate + CoA + H(+). It carries out the reaction eicosanoyl-CoA + H2O = eicosanoate + CoA + H(+). The catalysed reaction is (5Z,8Z,11Z,14Z)-eicosatetraenoyl-CoA + H2O = (5Z,8Z,11Z,14Z)-eicosatetraenoate + CoA + H(+). The enzyme catalyses 4,8-dimethylnonanoyl-CoA + H2O = 4,8-dimethylnonanoate + CoA + H(+). It catalyses the reaction 2,6-dimethylheptanoyl-CoA + H2O = 2,6-dimethylheptanoate + CoA + H(+). It carries out the reaction (3S)-3-hydroxy-3-methylglutaryl-CoA + H2O = 3-hydroxy-3-methylglutarate + CoA + H(+). The catalysed reaction is 3alpha,7alpha,12alpha-trihydroxy-5beta-cholestan-26-oyl-CoA + H2O = 3alpha,7alpha,12alpha-trihydroxy-5beta-cholestan-26-oate + CoA + H(+). The enzyme catalyses 2-methyloctadecanoyl-CoA + H2O = 2-methyloctadecanoate + CoA + H(+). It catalyses the reaction prostaglandin F2alpha-CoA + H2O = prostaglandin F2alpha + CoA + H(+). It functions in the pathway lipid metabolism; fatty acid metabolism. Its activity is regulated as follows. Inhibited by CoASH (IC(50)=10-15 uM). Also inhibited by cysteine-reactive agents. Functionally, catalyzes the hydrolysis of acyl-CoAs into free fatty acids and coenzyme A (CoASH), regulating their respective intracellular levels. Displays no strong substrate specificity with respect to the carboxylic acid moiety of Acyl-CoAs. Hydrolyzes medium length (C2 to C20) straight-chain, saturated and unsaturated acyl-CoAS but is inactive towards substrates with longer aliphatic chains. Moreover, it catalyzes the hydrolysis of CoA esters of bile acids, such as choloyl-CoA and chenodeoxycholoyl-CoA and competes with bile acid CoA:amino acid N-acyltransferase (BAAT). Is also able to hydrolyze CoA esters of dicarboxylic acids. It is involved in the metabolic regulation of peroxisome proliferation. This is Acyl-coenzyme A thioesterase 8 (Acot8) from Mus musculus (Mouse).